A 252-amino-acid polypeptide reads, in one-letter code: 3-deoxy-manno-octulosonate cytidylyltransferase (252 aa).

The protein belongs to the KdsB family.

The protein localises to the cytoplasm. The enzyme catalyses 3-deoxy-alpha-D-manno-oct-2-ulosonate + CTP = CMP-3-deoxy-beta-D-manno-octulosonate + diphosphate. It functions in the pathway nucleotide-sugar biosynthesis; CMP-3-deoxy-D-manno-octulosonate biosynthesis; CMP-3-deoxy-D-manno-octulosonate from 3-deoxy-D-manno-octulosonate and CTP: step 1/1. It participates in bacterial outer membrane biogenesis; lipopolysaccharide biosynthesis. Activates KDO (a required 8-carbon sugar) for incorporation into bacterial lipopolysaccharide in Gram-negative bacteria. In Solibacter usitatus (strain Ellin6076), this protein is 3-deoxy-manno-octulosonate cytidylyltransferase.